The primary structure comprises 304 residues: tRNA pseudouridine synthase B (304 aa).

Asp-38 functions as the Nucleophile in the catalytic mechanism.

It belongs to the pseudouridine synthase TruB family. Type 1 subfamily.

The enzyme catalyses uridine(55) in tRNA = pseudouridine(55) in tRNA. Responsible for synthesis of pseudouridine from uracil-55 in the psi GC loop of transfer RNAs. This Listeria monocytogenes serotype 4b (strain F2365) protein is tRNA pseudouridine synthase B.